The primary structure comprises 595 residues: Pectinesterase 5 (595 aa).

Residues 1 to 24 (MIGKVVVSVASILLIVGVAIGVVA) form the signal peptide. 2 N-linked (GlcNAc...) asparagine glycosylation sites follow: Asn86 and Asn206. The interval 215 to 239 (SDKGAAPVNKGTPPVADDSPVADPD) is disordered. Positions 227-239 (PPVADDSPVADPD) are enriched in low complexity. The RRLL cleavage motif motif lies at 243 to 246 (RRLL). An RKLM cleavage motif motif is present at residues 263 to 266 (RKLM). Asn349 carries N-linked (GlcNAc...) asparagine glycosylation. Positions 360 and 390 each coordinate substrate. Residue Asp413 is the Proton donor of the active site. Residue Asp434 is the Nucleophile of the active site. Positions 503 and 505 each coordinate substrate.

This sequence in the N-terminal section; belongs to the PMEI family. In the C-terminal section; belongs to the pectinesterase family. As to quaternary structure, interacts with SBT6.1. In terms of tissue distribution, expressed in pollen grains and pollen tubes.

The protein resides in the cell membrane. Its subcellular location is the secreted. The protein localises to the cell wall. It localises to the golgi apparatus membrane. The enzyme catalyses [(1-&gt;4)-alpha-D-galacturonosyl methyl ester](n) + n H2O = [(1-&gt;4)-alpha-D-galacturonosyl](n) + n methanol + n H(+). The protein operates within glycan metabolism; pectin degradation; 2-dehydro-3-deoxy-D-gluconate from pectin: step 1/5. Its function is as follows. Acts in the modification of cell walls via demethylesterification of cell wall pectin. Plays an important role in growth of pollen tubes in female floral tissues, possibly via enhancing the interaction between the pollen tube and female floral tissues by modification of the cell walls. May be regulated by MYB80 during anther development and play a role in tapetum and pollen development. This Arabidopsis thaliana (Mouse-ear cress) protein is Pectinesterase 5 (PME5).